Here is an 84-residue protein sequence, read N- to C-terminus: MAHKKAGGSTRNGRDSESKRLGVKRFGGESVLAGNIIVRQRGTKFHAGVNVGVGRDHTLFALTDGKVKFEVKGPNNRKFISIEG.

The tract at residues 1 to 22 (MAHKKAGGSTRNGRDSESKRLG) is disordered.

Belongs to the bacterial ribosomal protein bL27 family.

The chain is Large ribosomal subunit protein bL27 from Shewanella woodyi (strain ATCC 51908 / MS32).